We begin with the raw amino-acid sequence, 708 residues long: tRNA 5-methylaminomethyl-2-thiouridine biosynthesis bifunctional protein MnmC (708 aa).

The tRNA (mnm(5)s(2)U34)-methyltransferase stretch occupies residues 1–278 (MTAEPNKPCQ…ERQVLRQQDA (278 aa)). An FAD-dependent cmnm(5)s(2)U34 oxidoreductase region spans residues 301–708 (IGGGLASAHL…LRKLLKGKAL (408 aa)).

This sequence in the N-terminal section; belongs to the methyltransferase superfamily. tRNA (mnm(5)s(2)U34)-methyltransferase family. In the C-terminal section; belongs to the DAO family. Requires FAD as cofactor.

Its subcellular location is the cytoplasm. The enzyme catalyses 5-aminomethyl-2-thiouridine(34) in tRNA + S-adenosyl-L-methionine = 5-methylaminomethyl-2-thiouridine(34) in tRNA + S-adenosyl-L-homocysteine + H(+). Catalyzes the last two steps in the biosynthesis of 5-methylaminomethyl-2-thiouridine (mnm(5)s(2)U) at the wobble position (U34) in tRNA. Catalyzes the FAD-dependent demodification of cmnm(5)s(2)U34 to nm(5)s(2)U34, followed by the transfer of a methyl group from S-adenosyl-L-methionine to nm(5)s(2)U34, to form mnm(5)s(2)U34. The protein is tRNA 5-methylaminomethyl-2-thiouridine biosynthesis bifunctional protein MnmC of Shewanella baltica (strain OS195).